The following is a 785-amino-acid chain: Terminal nucleotidyltransferase 4A (785 aa).

The disordered stretch occupies residues 56–184 (AAGRAAPAAG…QFHPGRRKRE (129 aa)). The span at 68–85 (GPAPAASSPPPAPGPAAL) shows a compositional bias: pro residues. 2 stretches are compositionally biased toward low complexity: residues 86-98 (PPALLTALGPAAD) and 106-145 (SPSLSSSSSSSSSNAESGTESPGCSSSSSSSTSLGRAGSG). Residues D290 and D292 each contribute to the Mg(2+) site. ATP is bound by residues G353, K378, S396, and Y397. The 60-residue stretch at 421–480 (NLGMLLVEFFELYGRNFNYLKTGIRIKEGGAYIAKEEIMKAMTSGYRPSMLCIEDPLLPG) folds into the PAP-associated domain. 2 residues coordinate ATP: N481 and R485. Low complexity predominate over residues 593–611 (PQLLSSGSSASSVSSLSGS). Disordered stretches follow at residues 593 to 625 (PQLLSSGSSASSVSSLSGSDIDSDTPPCTTPSV) and 731 to 785 (KGSH…SLSR). Residues 757 to 774 (RGHHQYNRTGWRRKKHAH) show a composition bias toward basic residues.

Belongs to the DNA polymerase type-B-like family. Component of a nuclear TRAMP-like complex, an ATP-dependent exosome regulatory complex consisting of a helicase (MTREX), an oligadenylate polymerase (TENT4B or TENT4A), and a substrate specific RNA-binding factor (ZCCHC7 or ZCCHC8). Several TRAMP-like complexes exist with specific compositions and are associated with nuclear, or nucleolar RNA exosomes. Mg(2+) is required as a cofactor. It depends on Mn(2+) as a cofactor.

Its subcellular location is the cytoplasm. The protein localises to the nucleus. It localises to the nucleoplasm. The enzyme catalyses RNA(n) + ATP = RNA(n)-3'-adenine ribonucleotide + diphosphate. Its function is as follows. Terminal nucleotidyltransferase that catalyzes preferentially the transfer of ATP and GTP on RNA 3' poly(A) tail creating a heterogeneous 3' poly(A) tail leading to mRNAs stabilization by protecting mRNAs from active deadenylation. Also functions as a catalytic subunit of a TRAMP-like complex which has a poly(A) RNA polymerase activity and is involved in a post-transcriptional quality control mechanism. Polyadenylation with short oligo(A) tails is required for the degradative activity of the exosome on several of its nuclear RNA substrates. Has no terminal uridylyltransferase activity, and does not play a role in replication-dependent histone mRNA degradation via uridylation. The sequence is that of Terminal nucleotidyltransferase 4A from Mus musculus (Mouse).